We begin with the raw amino-acid sequence, 300 residues long: Ribonuclease HIII (300 aa).

Residues 86–300 (RPRLGVDESG…FYEICDSTDI (215 aa)) form the RNase H type-2 domain. A divalent metal cation contacts are provided by D92, E93, and D196.

The protein belongs to the RNase HII family. RnhC subfamily. The cofactor is Mn(2+). Mg(2+) is required as a cofactor.

Its subcellular location is the cytoplasm. The enzyme catalyses Endonucleolytic cleavage to 5'-phosphomonoester.. Endonuclease that specifically degrades the RNA of RNA-DNA hybrids. In Chlamydia abortus (strain DSM 27085 / S26/3) (Chlamydophila abortus), this protein is Ribonuclease HIII.